Here is an 86-residue protein sequence, read N- to C-terminus: Hepcidin-1 (86 aa).

Residues 1 to 22 form the signal peptide; sequence MKAFSVAVVLVIACMFILESTA. A propeptide spanning residues 23–59 is cleaved from the precursor; sequence VPFSEVRTEEVGSFDSPVGEHQQPGGESMHLPEPFRF. 4 disulfide bridges follow: C68/C84, C71/C74, C72/C80, and C75/C83.

This sequence belongs to the hepcidin family.

The protein localises to the secreted. Seems to act as a signaling molecule involved in the maintenance of iron homeostasis. Seems to be required in conjunction with HFE to regulate both intestinal iron absorption and iron storage in macrophages. May also have antimicrobial activity. The sequence is that of Hepcidin-1 (hamp1) from Salmo salar (Atlantic salmon).